We begin with the raw amino-acid sequence, 236 residues long: UPF0177 protein YaiH (236 aa).

A run of 6 helical transmembrane segments spans residues 16–36 (YFSL…ILGY), 51–71 (ATAT…GILI), 90–110 (ILFL…TFTY), 131–151 (IVFP…FEEA), 180–200 (TGAN…TLIY), and 210–230 (ILVH…LQTI).

This sequence belongs to the UPF0177 family.

The protein localises to the cell membrane. This is UPF0177 protein YaiH (yaiH) from Lactococcus lactis subsp. lactis (strain IL1403) (Streptococcus lactis).